Consider the following 1085-residue polypeptide: Kinesin-like protein cut7 (1085 aa).

The tract at residues 1 to 70 (MAPRVAPGGS…TDHALHDENE (70 aa)) is disordered. The segment covering 24–37 (PVSTPNSHFRSASN) has biased composition (polar residues). The 350-residue stretch at 72 to 421 (NINVVVRVRG…LEYAARAKSI (350 aa)) folds into the Kinesin motor domain. Position 159-166 (159-166 (GQTGTGKT)) interacts with ATP. Coiled coils occupy residues 436 to 604 (LIKD…WNLK), 715 to 740 (ISSE…LRSL), and 897 to 955 (LALA…DSIK). 2 repeats span residues 987–998 (DESLCNLETTIE) and 999–1010 (DTSLVKLETTGD). Thr-1011 is subject to Phosphothreonine; by CDC2. The disordered stretch occupies residues 1049–1085 (YTSSNQTNEPDVYDKPSNSSRTSLLRSSRSAYSKMKR). The segment covering 1065-1078 (SNSSRTSLLRSSRS) has biased composition (low complexity).

Belongs to the TRAFAC class myosin-kinesin ATPase superfamily. Kinesin family. BimC subfamily.

Its subcellular location is the cytoplasm. The protein localises to the cytoskeleton. The protein resides in the microtubule organizing center. It localises to the spindle pole body. Could be a spindle pole body motor. On transition from G2 to M phase of the cell cycle, the spindle pole body duplicates; the daughter pole bodies seed microtubules which interdigitate to form a short spindle that elongates to span the nucleus at metaphase. Mutations at cut7 block spindle formation. This chain is Kinesin-like protein cut7 (cut7), found in Schizosaccharomyces pombe (strain 972 / ATCC 24843) (Fission yeast).